A 245-amino-acid chain; its full sequence is Carboxymethylenebutenolidase homolog (245 aa).

The residue at position 2 (Ala2) is an N-acetylalanine. Catalysis depends on residues Cys132, Asp179, and His212. Ser223 carries the phosphoserine modification.

This sequence belongs to the dienelactone hydrolase family.

The protein resides in the cytoplasm. It localises to the cytosol. In terms of biological role, cysteine hydrolase. The protein is Carboxymethylenebutenolidase homolog (Cmbl) of Rattus norvegicus (Rat).